The following is a 544-amino-acid chain: CTP synthase (544 aa).

Residues methionine 1–leucine 265 are amidoligase domain. Serine 13 is a CTP binding site. Serine 13 is a UTP binding site. Serine 14–leucine 19 is an ATP binding site. L-glutamine is bound at residue tyrosine 54. Aspartate 71 contributes to the ATP binding site. Mg(2+)-binding residues include aspartate 71 and glutamate 139. Residues aspartate 146–glutamate 148, lysine 186–glutamine 191, and lysine 222 each bind CTP. UTP is bound by residues lysine 186–glutamine 191 and lysine 222. The Glutamine amidotransferase type-1 domain occupies threonine 291–leucine 543. Glycine 355 lines the L-glutamine pocket. The active-site Nucleophile; for glutamine hydrolysis is cysteine 382. Residues leucine 383–glutamine 386, glutamate 406, and arginine 471 each bind L-glutamine. Catalysis depends on residues histidine 516 and glutamate 518.

Belongs to the CTP synthase family. As to quaternary structure, homotetramer.

The catalysed reaction is UTP + L-glutamine + ATP + H2O = CTP + L-glutamate + ADP + phosphate + 2 H(+). The enzyme catalyses L-glutamine + H2O = L-glutamate + NH4(+). It carries out the reaction UTP + NH4(+) + ATP = CTP + ADP + phosphate + 2 H(+). Its pathway is pyrimidine metabolism; CTP biosynthesis via de novo pathway; CTP from UDP: step 2/2. Allosterically activated by GTP, when glutamine is the substrate; GTP has no effect on the reaction when ammonia is the substrate. The allosteric effector GTP functions by stabilizing the protein conformation that binds the tetrahedral intermediate(s) formed during glutamine hydrolysis. Inhibited by the product CTP, via allosteric rather than competitive inhibition. In terms of biological role, catalyzes the ATP-dependent amination of UTP to CTP with either L-glutamine or ammonia as the source of nitrogen. Regulates intracellular CTP levels through interactions with the four ribonucleotide triphosphates. The polypeptide is CTP synthase (Zymomonas mobilis subsp. mobilis (strain ATCC 31821 / ZM4 / CP4)).